We begin with the raw amino-acid sequence, 413 residues long: Gamma-lactamase FDB1 (413 aa).

Zn(2+) contacts are provided by H126, H128, D130, H131, H211, D235, and H323.

This sequence belongs to the metallo-beta-lactamase superfamily.

It functions in the pathway xenobiotic degradation. In terms of biological role, gamma-lactamase; part of the Fusarium detoxification of benzoxazolinone cluster involved in the degradation of benzoxazolinones produced by the host plant. Maize, wheat, and rye produce the 2 benzoxazinone phytoanticipins 2,4-dihy-droxy-7-methoxy-1,4-benzoxazin-3-one (DIMBOA) and 2,4-dihydroxy-1,4-benzoxazin-3-one (DIBOA) that, due to their inherent instability once released, spontaneously degrade to the more stable corresponding benzoxazolinones, 6-methoxy-2-benzoxazolinone (MBOA) and 2-benzoxazolinone (BOA), respectively. The first step in the detoxification of benzoxazolinones involves the hydrolysis of the cyclic ester bond of benzoxazolinones by the gamma-lactamase FDB1 to aminophenols. FDB1 is able to convert BOA into 2-aminophenol (2-AP), as well as MBOA into 5-methoxy-2-aminophenol (2-AMP). The N-malonyltransferase FDB2 then metabolizes aminophenols via N-malonylation to non-toxic malonamic acids. FDB2 converts 2-AP into N-(2-hydroxyphenyl) malonamic acid (HPMA) and 2-AMP into N-(2-hydroxy-4-methoxyphenyl) malonamic acid (HMPMA). The cluster also contains 2 transcription factors (FDB3 and FPSE_08121), an aldo-keto reductase (FPSE_08125) that possibly associates with a ketone component of BOA and MBOA degradation, an esterase (FPSE_08126), an acyl-CoA transferase (FPSE_08120), a solute carrier protein (FPSE_08119) and a transmembrane transporter (FPSE_08127) proposed to shuttle metabolites of benzoxazolinone degradation. The chain is Gamma-lactamase FDB1 from Fusarium pseudograminearum (strain CS3096) (Wheat and barley crown-rot fungus).